Reading from the N-terminus, the 251-residue chain is Malonyl-[acyl-carrier protein] O-methyltransferase (251 aa).

This sequence belongs to the methyltransferase superfamily.

It carries out the reaction malonyl-[ACP] + S-adenosyl-L-methionine = malonyl-[ACP] methyl ester + S-adenosyl-L-homocysteine. It participates in cofactor biosynthesis; biotin biosynthesis. Functionally, converts the free carboxyl group of a malonyl-thioester to its methyl ester by transfer of a methyl group from S-adenosyl-L-methionine (SAM). It allows to synthesize pimeloyl-ACP via the fatty acid synthetic pathway. In Salmonella typhimurium (strain LT2 / SGSC1412 / ATCC 700720), this protein is Malonyl-[acyl-carrier protein] O-methyltransferase.